The sequence spans 415 residues: Glucose-6-phosphate isomerase (415 aa).

The active-site Proton donor is Glu267. Residues His293 and Lys406 contribute to the active site.

This sequence belongs to the GPI family.

The protein resides in the cytoplasm. It carries out the reaction alpha-D-glucose 6-phosphate = beta-D-fructose 6-phosphate. Its pathway is carbohydrate biosynthesis; gluconeogenesis. It functions in the pathway carbohydrate degradation; glycolysis; D-glyceraldehyde 3-phosphate and glycerone phosphate from D-glucose: step 2/4. In terms of biological role, catalyzes the reversible isomerization of glucose-6-phosphate to fructose-6-phosphate. The sequence is that of Glucose-6-phosphate isomerase from Thermus thermophilus (strain ATCC 27634 / DSM 579 / HB8).